The primary structure comprises 463 residues: Interferon-inducible GTPase 5 (463 aa).

The 183-residue stretch at I53–D235 folds into the IRG-type G domain. GTP contacts are provided by residues E62–S69, T87–E91, K169–D171, and S216–L218. 2 positions are modified to phosphoserine: S247 and S304. Residues L404–P437 are disordered.

This sequence belongs to the TRAFAC class dynamin-like GTPase superfamily. IRG family. Abundantly expressed in semen (at protein level).

It localises to the cell projection. The protein resides in the cilium. It is found in the flagellum. The protein localises to the lipid droplet. The enzyme catalyses GTP + H2O = GDP + phosphate + H(+). In terms of biological role, required for sperm motility and therefore male fertility, via positive regulation of spermatozoa fibrous sheath formation. The chain is Interferon-inducible GTPase 5 from Homo sapiens (Human).